A 362-amino-acid polypeptide reads, in one-letter code: MNAHTAGGHALRHDWTLSEVQALFALPFNDLLFQAQTIHRAHFDPNEVQVSTLLSIKTGACPEDCKYCPQSARYHTGLETERLMEVEKVLERAREARANGSSRFCMGAAWRNPKERDMPYILRMIEEVRGLGMETCMTLGMLTADQAARLGAAGLDYYNHNLDTSPEFYGEIISTRTYQDRLDTLEHVRGAGMKVCSGGIVGMGEQAKDRAGLLMALANLPRHPESVPINMLVKVKGTPLENEANLDSFEFIRTIAVARIMMPASHVRLSAGREKMNEQMQAMCFMAGANSIFYGCKLLTTPNPDENSDMQLFKRLGIRPAQRAQKPDQIQEEEILAEVSRQNAPDEMFYDATRPRAGVARS.

The Radical SAM core domain maps to 46-273 (NEVQVSTLLS…ASHVRLSAGR (228 aa)). 3 residues coordinate [4Fe-4S] cluster: cysteine 61, cysteine 65, and cysteine 68. Positions 105, 136, 196, and 268 each coordinate [2Fe-2S] cluster.

It belongs to the radical SAM superfamily. Biotin synthase family. In terms of assembly, homodimer. [4Fe-4S] cluster serves as cofactor. The cofactor is [2Fe-2S] cluster.

The catalysed reaction is (4R,5S)-dethiobiotin + (sulfur carrier)-SH + 2 reduced [2Fe-2S]-[ferredoxin] + 2 S-adenosyl-L-methionine = (sulfur carrier)-H + biotin + 2 5'-deoxyadenosine + 2 L-methionine + 2 oxidized [2Fe-2S]-[ferredoxin]. It functions in the pathway cofactor biosynthesis; biotin biosynthesis; biotin from 7,8-diaminononanoate: step 2/2. In terms of biological role, catalyzes the conversion of dethiobiotin (DTB) to biotin by the insertion of a sulfur atom into dethiobiotin via a radical-based mechanism. This chain is Biotin synthase, found in Aeromonas salmonicida (strain A449).